A 491-amino-acid chain; its full sequence is Lysine--tRNA ligase (491 aa).

Residues E398 and E405 each coordinate Mg(2+).

Belongs to the class-II aminoacyl-tRNA synthetase family. As to quaternary structure, homodimer. Mg(2+) is required as a cofactor.

Its subcellular location is the cytoplasm. The catalysed reaction is tRNA(Lys) + L-lysine + ATP = L-lysyl-tRNA(Lys) + AMP + diphosphate. This chain is Lysine--tRNA ligase, found in Mycoplasmopsis synoviae (strain 53) (Mycoplasma synoviae).